We begin with the raw amino-acid sequence, 410 residues long: Probable inactive allantoicase (410 aa).

This sequence belongs to the allantoicase family.

In terms of biological role, the function of this enzyme is unclear as allantoicase activity is not known to exist in mammals. The polypeptide is Probable inactive allantoicase (ALLC) (Macaca fascicularis (Crab-eating macaque)).